A 213-amino-acid chain; its full sequence is UPF0319 protein HAPS_0727 (213 aa).

The signal sequence occupies residues 1-21; sequence MKLGKIALAMTALIAGTTAFA.

This sequence belongs to the UPF0319 family.

This is UPF0319 protein HAPS_0727 from Glaesserella parasuis serovar 5 (strain SH0165) (Haemophilus parasuis).